A 165-amino-acid chain; its full sequence is uncharacterized protein (165 aa).

The tract at residues 68–107 (LEGAPEWAAPHPEEQRRSPPACSQHTPPLPSTPTGPPPCS) is disordered. Residues 94–107 (PPLPSTPTGPPPCS) are compositionally biased toward pro residues.

This is an uncharacterized protein from Homo sapiens (Human).